The following is a 477-amino-acid chain: Bile acid transporter (477 aa).

15 consecutive transmembrane segments (helical) span residues 13–33 (FVPFAIAALLVSLIGGFTAVL), 50–70 (WISLALAMSSAACAPILGKLG), 83–103 (IVIFAAGNVLTAVATSLIFML), 107–127 (FIVGIGTAAISPIVMAYIVTE), 139–159 (LYMLISSGAVVVGPTCGGLIM), 166–186 (VMMWVCVALCVVVFLICTFSI), 206–226 (LVVVFFSLFLCIPSFGQNIGW), 228–248 (STAFIAAAAVALVALFILVMV), 272–292 (LILFLTQGLMMANMTNVIVFV), 301–321 (IISSFAISIMYIGMSLGSVII), 333–353 (VLTFSLVLTAIGCALMYLFKA), 359–379 (IFAASLGILGFGLGGNATIFM), 381–401 (VALSGLSSEVAGSGTGTYGLF), 406–426 (APFGVAVFVPMFANGVTANIA), and 444–464 (ISSIQTLTLVELGCIVVGIIL).

The protein belongs to the major facilitator superfamily.

It localises to the cell membrane. Its pathway is lipid metabolism; bile acid degradation. The polypeptide is Bile acid transporter (baiG) (Clostridium scindens (strain JCM 10418 / VPI 12708)).